The primary structure comprises 258 residues: UPF0246 protein Sfri_2896 (258 aa).

This sequence belongs to the UPF0246 family.

The chain is UPF0246 protein Sfri_2896 from Shewanella frigidimarina (strain NCIMB 400).